The primary structure comprises 464 residues: MASESGKLWGGRFVGAVDPIMEKFNASIAYDRHLWEVDVQGSKAYSRGLEKAGLLTKAEMDQILHGLDKVAEEWAQCTFKLSPNDEDIHTANERRLKELIGETAGKLHTGRSRNDQVVTDLRLWMRQTCSTLSGLLWELIRTMVDRAEAERDVLFPGYTHLQRAQPIRWSHWILSHAVALTRDSERLLEVRKRINVLPLGSGAIAGNPLSVDRELLRAELNFGAITLNSMDATSERDFVAEFLFWASLCMTHLSRMAEDLILYCTKEFSFVQLSDAYSTGSSLMPQKKNPDSLELIRSKAGRVFGRCAGLLMTLKGLPSTYNKDLQEDKEAVFEVSDTMSAVLQVATGVISTLQIHRENMGQALSPDMLATDLAYYLVRKGMPFRQAHEASGKAVFMAETKGVALNELSLQELQTISPLFSGDVSCVWDYGHSVEQYGALGGTARSSVDWQIRQVRALLQTQQA.

At A2 the chain carries N-acetylalanine. At K7 the chain carries N6-acetyllysine. Position 27 (S27) interacts with 2-(N(omega)-L-arginino)succinate. K69 bears the N6-acetyllysine mark. 2-(N(omega)-L-arginino)succinate-binding residues include N114 and T159. The active-site Proton acceptor is the H160. Catalysis depends on S281, which acts as the Proton donor. K288 is modified (N6-acetyllysine). Residues N289, Y321, Q326, and K329 each coordinate 2-(N(omega)-L-arginino)succinate.

It belongs to the lyase 1 family. Argininosuccinate lyase subfamily. In terms of assembly, homotetramer. Forms tissue-specific complexes with ASS1, SLC7A1, HSP90AA1 and nitric oxide synthase NOS1, NOS2 or NOS3; the complex maintenance is independent of ASL catalytic function. Acetylation modifies enzyme activity in response to alterations of extracellular nutrient availability. Acetylation increased with trichostin A (TSA) or with nicotinamide (NAM). Glucose increases acetylation by about a factor of 3 with decreasing enzyme activity. Acetylation on Lys-288 is decreased on the addition of extra amino acids resulting in activation of enzyme activity.

It carries out the reaction 2-(N(omega)-L-arginino)succinate = fumarate + L-arginine. Its pathway is amino-acid biosynthesis; L-arginine biosynthesis; L-arginine from L-ornithine and carbamoyl phosphate: step 3/3. It participates in nitrogen metabolism; urea cycle; L-arginine and fumarate from (N(omega)-L-arginino)succinate: step 1/1. Its activity is regulated as follows. Enzyme activity is regulated by acetylation. Functionally, catalyzes the reversible cleavage of L-argininosuccinate to fumarate and L-arginine, an intermediate step reaction in the urea cycle mostly providing for hepatic nitrogen detoxification into excretable urea as well as de novo L-arginine synthesis in nonhepatic tissues. Essential regulator of intracellular and extracellular L-arginine pools. As part of citrulline-nitric oxide cycle, forms tissue-specific multiprotein complexes with argininosuccinate synthase ASS1, transport protein SLC7A1 and nitric oxide synthase NOS1, NOS2 or NOS3, allowing for cell-autonomous L-arginine synthesis while channeling extracellular L-arginine to nitric oxide synthesis pathway. In Macaca fascicularis (Crab-eating macaque), this protein is Argininosuccinate lyase (ASL).